The primary structure comprises 508 residues: ATP synthase subunit alpha (508 aa).

Residue 169–176 (GDRQTGKT) coordinates ATP.

The protein belongs to the ATPase alpha/beta chains family. As to quaternary structure, F-type ATPases have 2 components, CF(1) - the catalytic core - and CF(0) - the membrane proton channel. CF(1) has five subunits: alpha(3), beta(3), gamma(1), delta(1), epsilon(1). CF(0) has three main subunits: a(1), b(2) and c(9-12). The alpha and beta chains form an alternating ring which encloses part of the gamma chain. CF(1) is attached to CF(0) by a central stalk formed by the gamma and epsilon chains, while a peripheral stalk is formed by the delta and b chains.

The protein localises to the cell inner membrane. The catalysed reaction is ATP + H2O + 4 H(+)(in) = ADP + phosphate + 5 H(+)(out). Produces ATP from ADP in the presence of a proton gradient across the membrane. The alpha chain is a regulatory subunit. The sequence is that of ATP synthase subunit alpha from Allorhizobium ampelinum (strain ATCC BAA-846 / DSM 112012 / S4) (Agrobacterium vitis (strain S4)).